Consider the following 424-residue polypeptide: Protein shisa-9 (424 aa).

The N-terminal stretch at 1 to 23 is a signal peptide; the sequence is MRRVLRLLLGCFLTELCARMCRA. At 24–149 the chain is on the extracellular side; that stretch reads QERSGHGQLA…DPLHDPTKDK (126 aa). N-linked (GlcNAc...) asparagine glycans are attached at residues asparagine 45, asparagine 89, and asparagine 116. Residues 150–170 form a helical membrane-spanning segment; that stretch reads TNLIVYIICGVVAVMVLVGIF. Over 171-424 the chain is Cytoplasmic; sequence TKLGLEKAHR…ITNSKTEVTV (254 aa). Disordered stretches follow at residues 333–373 and 389–424; these read PRAF…TWDP and LGIA…EVTV. Polar residues-rich tracts occupy residues 362-373 and 402-424; these read YNSTANFKTWDP and TRTQ…EVTV.

This sequence belongs to the shisa family. SHISA9 subfamily. As to quaternary structure, component of some AMPA receptors (ionotropic glutamate receptors) complex, at least composed of some AMPA receptor (GRIA1, GRIA2 and/or GRIA3), CACNG2 and SHISA9, as well as low level of DLG4. Brain-specific. Mainly expressed in neurons, including in hippocampus, cerebral cortex, striatum, thalamus, olfactory bulb and cerebellum. Expressed in most brain structures during embryonic and postnatal development.

It localises to the cell projection. It is found in the dendritic spine membrane. Its subcellular location is the synapse. Functionally, regulator of short-term neuronal synaptic plasticity in the dentate gyrus. Associates with AMPA receptors (ionotropic glutamate receptors) in synaptic spines and promotes AMPA receptor desensitization at excitatory synapses. This chain is Protein shisa-9 (Shisa9), found in Mus musculus (Mouse).